Consider the following 215-residue polypeptide: Cytochrome b6 (215 aa).

The chain crosses the membrane as a helical span at residues 32 to 52; that stretch reads IFHCLGGITLTCFLVQVATGF. Cys35 is a heme c binding site. Residues His86 and His100 each contribute to the heme b site. 3 helical membrane-spanning segments follow: residues 90–110, 116–136, and 186–206; these read ASMM…TGGF, LTWV…VTGY, and LHTF…FPMI. Heme b contacts are provided by His187 and His202.

Belongs to the cytochrome b family. PetB subfamily. As to quaternary structure, the 4 large subunits of the cytochrome b6-f complex are cytochrome b6, subunit IV (17 kDa polypeptide, PetD), cytochrome f and the Rieske protein, while the 4 small subunits are PetG, PetL, PetM and PetN. The complex functions as a dimer. Requires heme b as cofactor. Heme c serves as cofactor.

The protein resides in the plastid. It is found in the chloroplast thylakoid membrane. Component of the cytochrome b6-f complex, which mediates electron transfer between photosystem II (PSII) and photosystem I (PSI), cyclic electron flow around PSI, and state transitions. The sequence is that of Cytochrome b6 from Amborella trichopoda.